A 53-amino-acid chain; its full sequence is MPITLDPEKLAIVMKHRFQYKICRECGARNPPDAVKCRRCRSKNLRPKKFKKK.

Belongs to the eukaryotic ribosomal protein eL40 family.

This chain is Large ribosomal subunit protein eL40, found in Pyrobaculum neutrophilum (strain DSM 2338 / JCM 9278 / NBRC 100436 / V24Sta) (Thermoproteus neutrophilus).